The following is a 136-amino-acid chain: Nucleoside diphosphate kinase (136 aa).

ATP contacts are provided by Lys10, Phe58, Arg86, Thr92, Arg104, and Asn114. His117 serves as the catalytic Pros-phosphohistidine intermediate.

It belongs to the NDK family. In terms of assembly, homotetramer. Mg(2+) serves as cofactor.

The protein resides in the cytoplasm. It carries out the reaction a 2'-deoxyribonucleoside 5'-diphosphate + ATP = a 2'-deoxyribonucleoside 5'-triphosphate + ADP. It catalyses the reaction a ribonucleoside 5'-diphosphate + ATP = a ribonucleoside 5'-triphosphate + ADP. Functionally, major role in the synthesis of nucleoside triphosphates other than ATP. The ATP gamma phosphate is transferred to the NDP beta phosphate via a ping-pong mechanism, using a phosphorylated active-site intermediate. This Mycolicibacterium paratuberculosis (strain ATCC BAA-968 / K-10) (Mycobacterium paratuberculosis) protein is Nucleoside diphosphate kinase.